Reading from the N-terminus, the 320-residue chain is Malate dehydrogenase (320 aa).

NAD(+) is bound by residues G10–G15 and D34. Substrate is bound by residues R83 and R89. NAD(+) contacts are provided by residues N96 and I119 to N121. Positions 121 and 152 each coordinate substrate. Residue H176 is the Proton acceptor of the active site.

The protein belongs to the LDH/MDH superfamily. MDH type 3 family.

It catalyses the reaction (S)-malate + NAD(+) = oxaloacetate + NADH + H(+). Catalyzes the reversible oxidation of malate to oxaloacetate. The polypeptide is Malate dehydrogenase (Bartonella tribocorum (strain CIP 105476 / IBS 506)).